We begin with the raw amino-acid sequence, 377 residues long: Dihydroorotase, mitochondrial (377 aa).

Zn(2+)-binding residues include H44, H46, K130, H168, and H206. K130 is subject to N6-carboxylysine. At S223 the chain carries Phosphoserine. D280 is a binding site for Zn(2+).

It belongs to the metallo-dependent hydrolases superfamily. DHOase family. Class II DHOase subfamily. It depends on Zn(2+) as a cofactor.

The protein localises to the mitochondrion. The catalysed reaction is (S)-dihydroorotate + H2O = N-carbamoyl-L-aspartate + H(+). Its pathway is pyrimidine metabolism; UMP biosynthesis via de novo pathway; (S)-dihydroorotate from bicarbonate: step 3/3. The chain is Dihydroorotase, mitochondrial (PYR4) from Arabidopsis thaliana (Mouse-ear cress).